The primary structure comprises 138 residues: Thyrotropin subunit beta (138 aa).

The signal sequence occupies residues 1-20; it reads MNAVVLFSVLFALACGQVSS. Cystine bridges form between Cys22–Cys72, Cys36–Cys87, Cys39–Cys125, Cys47–Cys103, Cys51–Cys105, and Cys108–Cys115. An N-linked (GlcNAc...) asparagine glycan is attached at Asn43. The propeptide occupies 133-138; sequence LGGFSG.

Belongs to the glycoprotein hormones subunit beta family. Heterodimer of a common alpha chain and a unique beta chain which confers biological specificity to thyrotropin, lutropin, follitropin and gonadotropin.

Its subcellular location is the secreted. Functionally, indispensable for the control of thyroid structure and metabolism. This Rattus norvegicus (Rat) protein is Thyrotropin subunit beta (Tshb).